The following is a 455-amino-acid chain: Tubulin alpha chain (455 aa).

Positions 11, 77, 145, 149, 150, 184, 211, and 233 each coordinate GTP. Position 77 (E77) interacts with Mg(2+). E259 is an active-site residue.

The protein belongs to the tubulin family. In terms of assembly, dimer of alpha and beta chains. A typical microtubule is a hollow water-filled tube with an outer diameter of 25 nm and an inner diameter of 15 nM. Alpha-beta heterodimers associate head-to-tail to form protofilaments running lengthwise along the microtubule wall with the beta-tubulin subunit facing the microtubule plus end conferring a structural polarity. Microtubules usually have 13 protofilaments but different protofilament numbers can be found in some organisms and specialized cells. The cofactor is Mg(2+).

It is found in the cytoplasm. It localises to the cytoskeleton. The catalysed reaction is GTP + H2O = GDP + phosphate + H(+). Functionally, tubulin is the major constituent of microtubules, a cylinder consisting of laterally associated linear protofilaments composed of alpha- and beta-tubulin heterodimers. Microtubules grow by the addition of GTP-tubulin dimers to the microtubule end, where a stabilizing cap forms. Below the cap, tubulin dimers are in GDP-bound state, owing to GTPase activity of alpha-tubulin. The chain is Tubulin alpha chain from Entamoeba histolytica (strain ATCC 30459 / HM-1:IMSS / ABRM).